Here is a 366-residue protein sequence, read N- to C-terminus: Chorismate synthase (366 aa).

2 residues coordinate NADP(+): Arg48 and Arg54. FMN-binding positions include 132-134 (RSS), 244-245 (NA), Gly289, 304-308 (KPTSS), and Arg330.

This sequence belongs to the chorismate synthase family. In terms of assembly, homotetramer. FMNH2 serves as cofactor.

It carries out the reaction 5-O-(1-carboxyvinyl)-3-phosphoshikimate = chorismate + phosphate. It functions in the pathway metabolic intermediate biosynthesis; chorismate biosynthesis; chorismate from D-erythrose 4-phosphate and phosphoenolpyruvate: step 7/7. In terms of biological role, catalyzes the anti-1,4-elimination of the C-3 phosphate and the C-6 proR hydrogen from 5-enolpyruvylshikimate-3-phosphate (EPSP) to yield chorismate, which is the branch point compound that serves as the starting substrate for the three terminal pathways of aromatic amino acid biosynthesis. This reaction introduces a second double bond into the aromatic ring system. The sequence is that of Chorismate synthase from Methylobacterium radiotolerans (strain ATCC 27329 / DSM 1819 / JCM 2831 / NBRC 15690 / NCIMB 10815 / 0-1).